The sequence spans 314 residues: DNA oxidative demethylase ALKBH2 (314 aa).

Residues 1–28 (MTNPLNSTAANRSNQPSSDGISDGQITN) show a composition bias toward polar residues. A disordered region spans residues 1 to 75 (MTNPLNSTAA…KRFHYHQDQR (75 aa)). Residues 57–75 (NGKDDSDTKKRFHYHQDQR) show a composition bias toward basic and acidic residues. Substrate-binding positions include tryptophan 132 and 160-163 (ALVY). The Fe2OG dioxygenase domain occupies 194 to 314 (RFNSLLLNRY…RINLTFRLVL (121 aa)). 201 to 203 (NRY) serves as a coordination point for 2-oxoglutarate. The Fe cation site is built by histidine 213 and aspartate 215. Aspartate 216 contacts substrate. A disordered region spans residues 242–271 (KKDEESSQGKTGDSGPAKKRLKRSSREDQQ). Histidine 293 contributes to the Fe cation binding site. Residues arginine 305 and 305–311 (RINLTFR) each bind 2-oxoglutarate.

Belongs to the alkB family. The cofactor is Fe(2+). Expressed ubiquitously, including in seedlings, leaves and flowers.

Its subcellular location is the nucleus. It carries out the reaction a methylated nucleobase within DNA + 2-oxoglutarate + O2 = a nucleobase within DNA + formaldehyde + succinate + CO2. Functionally, dioxygenase that repairs alkylated DNA containing 1-methyladenine and 1-ethenoadenine by oxidative demethylation. Accepts double-stranded and single-stranded substrates, with a preference for dsDNA over ssDNA. Confers resistance to methylating agents such as methylmethanesulphonate (MMS). The chain is DNA oxidative demethylase ALKBH2 (ALKBH2) from Arabidopsis thaliana (Mouse-ear cress).